Here is a 328-residue protein sequence, read N- to C-terminus: Endochitinase (328 aa).

The N-terminal stretch at 1–27 (MKKNRMMMMIWSVGVVWMLLLVGGSYG) is a signal peptide. Positions 28–68 (EQCGRQAGGALCPGGNCCSQFGWCGSTTDYCGPGCQSQCGG) constitute a Chitin-binding type-1 domain. Cystine bridges form between cysteine 30-cysteine 45, cysteine 39-cysteine 51, cysteine 44-cysteine 58, cysteine 62-cysteine 66, cysteine 97-cysteine 159, cysteine 170-cysteine 178, and cysteine 277-cysteine 309. The active-site Proton donor is the glutamate 141. The propeptide at 318–328 (SLLLSDLVTSQ) is removed in mature form.

This sequence belongs to the glycosyl hydrolase 19 family. Chitinase class I subfamily.

Its subcellular location is the vacuole. It catalyses the reaction Random endo-hydrolysis of N-acetyl-beta-D-glucosaminide (1-&gt;4)-beta-linkages in chitin and chitodextrins.. In terms of biological role, defense against chitin-containing fungal pathogens. In Phaseolus vulgaris (Kidney bean), this protein is Endochitinase.